The primary structure comprises 220 residues: FMN-dependent NADH:quinone oxidoreductase 1 (220 aa).

18–20 (SVS) serves as a coordination point for FMN.

Belongs to the azoreductase type 1 family. As to quaternary structure, homodimer. It depends on FMN as a cofactor.

The enzyme catalyses 2 a quinone + NADH + H(+) = 2 a 1,4-benzosemiquinone + NAD(+). The catalysed reaction is N,N-dimethyl-1,4-phenylenediamine + anthranilate + 2 NAD(+) = 2-(4-dimethylaminophenyl)diazenylbenzoate + 2 NADH + 2 H(+). Its function is as follows. Quinone reductase that provides resistance to thiol-specific stress caused by electrophilic quinones. In terms of biological role, also exhibits azoreductase activity. Catalyzes the reductive cleavage of the azo bond in aromatic azo compounds to the corresponding amines. This is FMN-dependent NADH:quinone oxidoreductase 1 from Bacillus anthracis.